Here is a 140-residue protein sequence, read N- to C-terminus: uncharacterized protein (140 aa).

Transmembrane regions (helical) follow at residues 42–62 (AFLFNFLPLLLLLAFLDIFAS), 65–85 (ASFLAAVLIKILVKSVFSALG), and 96–116 (RASDCLAALEFFDIFLAMLCF).

It is found in the membrane. This is an uncharacterized protein from Saccharomyces cerevisiae (strain ATCC 204508 / S288c) (Baker's yeast).